The following is a 545-amino-acid chain: Chaperonin GroEL (545 aa).

ATP is bound by residues 29–32 (TLGP), lysine 50, 86–90 (DGTTT), glycine 413, and aspartate 495.

The protein belongs to the chaperonin (HSP60) family. Forms a cylinder of 14 subunits composed of two heptameric rings stacked back-to-back. Interacts with the co-chaperonin GroES.

The protein localises to the cytoplasm. It carries out the reaction ATP + H2O + a folded polypeptide = ADP + phosphate + an unfolded polypeptide.. In terms of biological role, together with its co-chaperonin GroES, plays an essential role in assisting protein folding. The GroEL-GroES system forms a nano-cage that allows encapsulation of the non-native substrate proteins and provides a physical environment optimized to promote and accelerate protein folding. This Borreliella burgdorferi (strain ATCC 35210 / DSM 4680 / CIP 102532 / B31) (Borrelia burgdorferi) protein is Chaperonin GroEL.